The primary structure comprises 202 residues: Small ribosomal subunit protein uS5 (202 aa).

Over residues 1–13 (MPGQQRRGGGSGG) the composition is skewed to gly residues. Positions 1-31 (MPGQQRRGGGSGGSDRRERRDRSGGGPAQEK) are disordered. Residues 14-23 (SDRRERRDRS) show a composition bias toward basic and acidic residues. Residues 34–97 (YVERVVAINR…EEAKKHFFKV (64 aa)) enclose the S5 DRBM domain.

The protein belongs to the universal ribosomal protein uS5 family. In terms of assembly, part of the 30S ribosomal subunit. Contacts proteins S4 and S8.

Functionally, with S4 and S12 plays an important role in translational accuracy. Its function is as follows. Located at the back of the 30S subunit body where it stabilizes the conformation of the head with respect to the body. The sequence is that of Small ribosomal subunit protein uS5 from Frankia alni (strain DSM 45986 / CECT 9034 / ACN14a).